A 728-amino-acid polypeptide reads, in one-letter code: Catalase-peroxidase 2 (728 aa).

The tryptophyl-tyrosyl-methioninium (Trp-Tyr) (with M-240) cross-link spans 91–214 (WHAAGTYRTG…LAAVQMGLIY (124 aa)). His-92 acts as the Proton acceptor in catalysis. Residues 214–240 (YVNPEGPNGNPDPAKAAVDIRETFARM) constitute a cross-link (tryptophyl-tyrosyl-methioninium (Tyr-Met) (with W-91)). Heme b is bound at residue His-255. The tract at residues 338-362 (WKPNGDAGANSIPDPYDPSRRRGPT) is disordered.

It belongs to the peroxidase family. Peroxidase/catalase subfamily. As to quaternary structure, homodimer or homotetramer. Heme b is required as a cofactor. In terms of processing, formation of the three residue Trp-Tyr-Met cross-link is important for the catalase, but not the peroxidase activity of the enzyme.

The catalysed reaction is H2O2 + AH2 = A + 2 H2O. The enzyme catalyses 2 H2O2 = O2 + 2 H2O. Its function is as follows. Bifunctional enzyme with both catalase and broad-spectrum peroxidase activity. This Cupriavidus pinatubonensis (strain JMP 134 / LMG 1197) (Cupriavidus necator (strain JMP 134)) protein is Catalase-peroxidase 2.